The primary structure comprises 539 residues: ATP synthase subunit beta (539 aa).

The disordered stretch occupies residues Met-1–Pro-44. An ATP-binding site is contributed by Gly-212–Thr-219.

Belongs to the ATPase alpha/beta chains family. In terms of assembly, F-type ATPases have 2 components, CF(1) - the catalytic core - and CF(0) - the membrane proton channel. CF(1) has five subunits: alpha(3), beta(3), gamma(1), delta(1), epsilon(1). CF(0) has three main subunits: a(1), b(2) and c(9-12). The alpha and beta chains form an alternating ring which encloses part of the gamma chain. CF(1) is attached to CF(0) by a central stalk formed by the gamma and epsilon chains, while a peripheral stalk is formed by the delta and b chains.

Its subcellular location is the cell inner membrane. The catalysed reaction is ATP + H2O + 4 H(+)(in) = ADP + phosphate + 5 H(+)(out). Functionally, produces ATP from ADP in the presence of a proton gradient across the membrane. The catalytic sites are hosted primarily by the beta subunits. In Caulobacter vibrioides (strain ATCC 19089 / CIP 103742 / CB 15) (Caulobacter crescentus), this protein is ATP synthase subunit beta.